An 84-amino-acid chain; its full sequence is Exodeoxyribonuclease 7 small subunit (84 aa).

The protein belongs to the XseB family. Heterooligomer composed of large and small subunits.

The protein resides in the cytoplasm. The enzyme catalyses Exonucleolytic cleavage in either 5'- to 3'- or 3'- to 5'-direction to yield nucleoside 5'-phosphates.. Functionally, bidirectionally degrades single-stranded DNA into large acid-insoluble oligonucleotides, which are then degraded further into small acid-soluble oligonucleotides. The polypeptide is Exodeoxyribonuclease 7 small subunit (Bartonella quintana (strain Toulouse) (Rochalimaea quintana)).